A 187-amino-acid polypeptide reads, in one-letter code: dCTP deaminase (187 aa).

DCTP-binding positions include 107-112 (KSTYAR), 131-133 (TLE), Q152, Y166, K175, and Q176. The active-site Proton donor/acceptor is the E133.

This sequence belongs to the dCTP deaminase family. Homotrimer.

The enzyme catalyses dCTP + H2O + H(+) = dUTP + NH4(+). Its pathway is pyrimidine metabolism; dUMP biosynthesis; dUMP from dCTP (dUTP route): step 1/2. In terms of biological role, catalyzes the deamination of dCTP to dUTP. This chain is dCTP deaminase, found in Ehrlichia canis (strain Jake).